The primary structure comprises 264 residues: Major prion protein (264 aa).

The first 24 residues, 1–24, serve as a signal peptide directing secretion; it reads MVKSHIGSWILVLFVAMWSDVGLC. Positions 25-241 are interaction with GRB2, ERI3 and SYN1; the sequence is KKRPKPGGGW…ESQAYYQRGA (217 aa). Residues 28–119 form a disordered region; sequence PKPGGGWNTG…WNKPSKPKTN (92 aa). 6 tandem repeats follow at residues 54–62, 63–70, 71–78, 79–86, 87–94, and 95–103. The interval 54–103 is 6 X 8 AA tandem repeats of P-H-G-G-G-W-G-Q; that stretch reads PQGGGGWGQPHGGGWGQPHGGGWGQPHGGGWGQPHGGGWGQPHGGGGWGQ. The segment covering 55 to 105 has biased composition (gly residues); the sequence is QGGGGWGQPHGGGWGQPHGGGWGQPHGGGWGQPHGGGWGQPHGGGGWGQGG. Residues His-72, Gly-73, Gly-74, His-80, Gly-81, Gly-82, His-88, Gly-89, Gly-90, His-96, Gly-98, and Gly-99 each contribute to the Cu(2+) site. A disulfide bond links Cys-190 and Cys-225. Residues Asn-192 and Asn-208 are each glycosylated (N-linked (GlcNAc...) asparagine). Residue Ala-241 is the site of GPI-anchor amidated alanine attachment. The propeptide at 242–264 is removed in mature form; that stretch reads SVILFSSPPVILLISFLIFLIVG.

It belongs to the prion family. Monomer and homodimer. Has a tendency to aggregate into amyloid fibrils containing a cross-beta spine, formed by a steric zipper of superposed beta-strands. Soluble oligomers may represent an intermediate stage on the path to fibril formation. Copper binding may promote oligomerization. Interacts with GRB2, APP, ERI3/PRNPIP and SYN1. Mislocalized cytosolically exposed PrP interacts with MGRN1; this interaction alters MGRN1 subcellular location and causes lysosomal enlargement. Interacts with KIAA1191.

Its subcellular location is the cell membrane. The protein resides in the golgi apparatus. Its function is as follows. Its primary physiological function is unclear. Has cytoprotective activity against internal or environmental stresses. May play a role in neuronal development and synaptic plasticity. May be required for neuronal myelin sheath maintenance. May play a role in iron uptake and iron homeostasis. Soluble oligomers are toxic to cultured neuroblastoma cells and induce apoptosis (in vitro). Association with GPC1 (via its heparan sulfate chains) targets PRNP to lipid rafts. Also provides Cu(2+) or Zn(2+) for the ascorbate-mediated GPC1 deaminase degradation of its heparan sulfate side chains. In Antilope cervicapra (Blackbuck), this protein is Major prion protein (PRNP).